The following is a 117-amino-acid chain: NADH-ubiquinone oxidoreductase chain 3 (117 aa).

A run of 3 helical transmembrane segments spans residues 1-21 (MLML…VMML), 57-77 (FFLI…LLPM), and 86-106 (LMNW…GLYH).

This sequence belongs to the complex I subunit 3 family.

The protein resides in the mitochondrion membrane. It carries out the reaction a ubiquinone + NADH + 5 H(+)(in) = a ubiquinol + NAD(+) + 4 H(+)(out). In terms of biological role, core subunit of the mitochondrial membrane respiratory chain NADH dehydrogenase (Complex I) that is believed to belong to the minimal assembly required for catalysis. Complex I functions in the transfer of electrons from NADH to the respiratory chain. The immediate electron acceptor for the enzyme is believed to be ubiquinone. The chain is NADH-ubiquinone oxidoreductase chain 3 (ND3) from Anopheles quadrimaculatus (Common malaria mosquito).